The following is a 512-amino-acid chain: Dihydroniloticin synthase CYP71CD1 (512 aa).

A helical membrane pass occupies residues Y7–W27. Position 451 (C451) interacts with heme.

Belongs to the cytochrome P450 family. Heme is required as a cofactor. In terms of tissue distribution, accumulates in mature fruits and in juice vesicles.

Its subcellular location is the membrane. The enzyme catalyses tirucalla-7,24-dien-3beta-ol + 2 reduced [NADPH--hemoprotein reductase] + 2 O2 = dihydroniloticin + 2 oxidized [NADPH--hemoprotein reductase] + 2 H2O + 2 H(+). It functions in the pathway secondary metabolite biosynthesis; terpenoid biosynthesis. Its function is as follows. Monooxygenase involved in the biosynthesis of limonoids triterpene natural products such as limonin, a compound with insecticidal activity responsible for the bitter taste in citrus. Catalyzes the conversion of tirucalladienol to dihydroniloticin. This is Dihydroniloticin synthase CYP71CD1 from Citrus sinensis (Sweet orange).